Reading from the N-terminus, the 171-residue chain is MGNELLSTARIYTFKIPDAYNNVIDFDQFKNKVILIVNVASLCGFTPQYKELQLLYEKYHERGLEILGFPCNQFGNQEPLQEEEIVESCRRNFGVSFPIMKKTKVNIDCDGHESELYKYLKSEKPGEVGFKGVRWNFEKFIVNRKGEVVARFNSLITPLQLEGFIEQLLSE.

The active-site Cysteine sulfenic acid (-SOH) intermediate is the Cys-43. Cys-43 and Cys-89 are oxidised to a cystine.

This sequence belongs to the glutathione peroxidase family. In terms of assembly, interacts with CAP1 and probably YBP1.

It catalyses the reaction a hydroperoxide + [thioredoxin]-dithiol = an alcohol + [thioredoxin]-disulfide + H2O. Involved in oxidative stress response and redox homeostasis. Functions as a sensor and transducer of hydroperoxide stress. In response to hydroperoxide stress it oxidizes (activates) the transcription activator CAP1, which is involved in transcription activation of genes of the oxidative stress response pathway. May also play a direct role in hydroperoxide scavenging. The enzyme is not required for the glutaredoxin-mediated antioxidant function. In the presence of peroxides, GPX3 is directly oxidized at Cys-43 to form a cysteine sulfenic acid (-SOH). Cys-43-SOH then forms either an intramolecular disulfide bond (Cys-43 with Cys-89) or a transient, intermolecular disulfide bond with 'Cys-446' of CAP1, which is further resolved into a CAP1 intramolecular disulfide bond ('Cys-303' with 'Cys-598'), which causes its nuclear accumulation and activation, and a reduced Cys-43 in GPX3. Required for C.albicans-mediated macrophage killing. This chain is Glutathione peroxidase-like peroxiredoxin GPX3, found in Candida albicans (strain SC5314 / ATCC MYA-2876) (Yeast).